The primary structure comprises 122 residues: Small ribosomal subunit protein uS13 (122 aa).

Residues 94–122 (SLPVRGQRTKTNARTRKVHVSRSKNSRGK) are disordered.

This sequence belongs to the universal ribosomal protein uS13 family. Part of the 30S ribosomal subunit. Forms a loose heterodimer with protein S19. Forms two bridges to the 50S subunit in the 70S ribosome.

Functionally, located at the top of the head of the 30S subunit, it contacts several helices of the 16S rRNA. In the 70S ribosome it contacts the 23S rRNA (bridge B1a) and protein L5 of the 50S subunit (bridge B1b), connecting the 2 subunits; these bridges are implicated in subunit movement. Contacts the tRNAs in the A and P-sites. This chain is Small ribosomal subunit protein uS13, found in Haemophilus influenzae (strain ATCC 51907 / DSM 11121 / KW20 / Rd).